The chain runs to 337 residues: Holliday junction branch migration complex subunit RuvB (337 aa).

The interval 4 to 186 is large ATPase domain (RuvB-L); it reads ADRLIHPQII…FGIPLRLEFY (183 aa). ATP-binding positions include Arg-26, Gly-67, Lys-70, Thr-71, Thr-72, 133-135, Arg-176, Tyr-186, and Arg-223; that span reads EDY. Thr-71 serves as a coordination point for Mg(2+). The small ATPAse domain (RuvB-S) stretch occupies residues 187-257; the sequence is NVKDLSSIVA…IAEAALDMLD (71 aa). Positions 260 to 337 are head domain (RuvB-H); sequence AEGFDYMDRK…NHFNIIKPDA (78 aa). 3 residues coordinate DNA: Arg-296, Arg-315, and Arg-320.

This sequence belongs to the RuvB family. In terms of assembly, homohexamer. Forms an RuvA(8)-RuvB(12)-Holliday junction (HJ) complex. HJ DNA is sandwiched between 2 RuvA tetramers; dsDNA enters through RuvA and exits via RuvB. An RuvB hexamer assembles on each DNA strand where it exits the tetramer. Each RuvB hexamer is contacted by two RuvA subunits (via domain III) on 2 adjacent RuvB subunits; this complex drives branch migration. In the full resolvosome a probable DNA-RuvA(4)-RuvB(12)-RuvC(2) complex forms which resolves the HJ.

It is found in the cytoplasm. The enzyme catalyses ATP + H2O = ADP + phosphate + H(+). Its function is as follows. The RuvA-RuvB-RuvC complex processes Holliday junction (HJ) DNA during genetic recombination and DNA repair, while the RuvA-RuvB complex plays an important role in the rescue of blocked DNA replication forks via replication fork reversal (RFR). RuvA specifically binds to HJ cruciform DNA, conferring on it an open structure. The RuvB hexamer acts as an ATP-dependent pump, pulling dsDNA into and through the RuvAB complex. RuvB forms 2 homohexamers on either side of HJ DNA bound by 1 or 2 RuvA tetramers; 4 subunits per hexamer contact DNA at a time. Coordinated motions by a converter formed by DNA-disengaged RuvB subunits stimulates ATP hydrolysis and nucleotide exchange. Immobilization of the converter enables RuvB to convert the ATP-contained energy into a lever motion, pulling 2 nucleotides of DNA out of the RuvA tetramer per ATP hydrolyzed, thus driving DNA branch migration. The RuvB motors rotate together with the DNA substrate, which together with the progressing nucleotide cycle form the mechanistic basis for DNA recombination by continuous HJ branch migration. Branch migration allows RuvC to scan DNA until it finds its consensus sequence, where it cleaves and resolves cruciform DNA. The polypeptide is Holliday junction branch migration complex subunit RuvB (Shewanella halifaxensis (strain HAW-EB4)).